The following is an 805-amino-acid chain: Arginine/serine-rich protein PNISR (805 aa).

Polar residues predominate over residues 75-88 (NNHGNFQGDSNFNR). Disordered regions lie at residues 75 to 331 (NNHG…EEKE) and 382 to 805 (LTGL…SRSR). 2 stretches are compositionally biased toward pro residues: residues 100–115 (PPHP…PAPG) and 183–194 (YWQPGPPGPPAP). Positions 197 to 210 (NRRERPPSFRDRQR) are enriched in basic and acidic residues. Phosphoserine occurs at positions 204 and 211. Residue Lys218 forms a Glycyl lysine isopeptide (Lys-Gly) (interchain with G-Cter in SUMO2) linkage. The stretch at 237 to 276 (REGLEKMEREKQKKLEKERMEQQRSQLSKKEKKATEDAEG) forms a coiled coil. Positions 238–258 (EGLEKMEREKQKKLEKERMEQ) are enriched in basic and acidic residues. 4 positions are modified to phosphoserine: Ser290, Ser304, Ser313, and Ser321. Acidic residues predominate over residues 290–299 (SDEEDEDAEN). The span at 384–393 (GLGGLGGYGS) shows a compositional bias: gly residues. Basic and acidic residues predominate over residues 421–463 (QKQEAFWRKEKEQQLLQDKQIEEEKQQTERVTKEMNEFIHREQ). Residues 427–461 (WRKEKEQQLLQDKQIEEEKQQTERVTKEMNEFIHR) are a coiled coil. Ser465 and Ser467 each carry phosphoserine. 2 stretches are compositionally biased toward basic and acidic residues: residues 473–486 (EADR…KRTP) and 494–508 (EPKR…ERGS). Position 485 is a phosphothreonine (Thr485). Lys496 participates in a covalent cross-link: Glycyl lysine isopeptide (Lys-Gly) (interchain with G-Cter in SUMO2). Low complexity predominate over residues 509–550 (RSGSSSSGSSSSGSRTSSSSSSVSSSSYSSSSGSSCTSSRSS). 4 stretches are compositionally biased toward basic residues: residues 551-560 (SPKRRKRPSR), 567-579 (KARR…YSRR), 587-598 (TRGKLRDRRRSN), and 607-639 (RRNR…SRDR). Residues 659–721 (EAKEQDRKKE…KRKRESERTF (63 aa)) show a composition bias toward basic and acidic residues. Lys703 is covalently cross-linked (Glycyl lysine isopeptide (Lys-Gly) (interchain with G-Cter in SUMO2)). Ser726 bears the Phosphoserine mark. A compositionally biased stretch (basic and acidic residues) spans 732–753 (IRHDSRQDSKKNATKDSKRHSG). Residues 754–767 (SDSSGRSSSESPGS) show a composition bias toward low complexity. Basic residues-rich tracts occupy residues 771-781 (KKAKKPKHSRS) and 789-805 (RSGK…SRSR).

It belongs to the splicing factor SR family. Interacts with PNN.

It is found in the nucleus speckle. In Mus musculus (Mouse), this protein is Arginine/serine-rich protein PNISR (Pnisr).